A 228-amino-acid chain; its full sequence is Probable septum site-determining protein MinC (228 aa).

It belongs to the MinC family. In terms of assembly, interacts with MinD and FtsZ.

Functionally, cell division inhibitor that blocks the formation of polar Z ring septums. Rapidly oscillates between the poles of the cell to destabilize FtsZ filaments that have formed before they mature into polar Z rings. Prevents FtsZ polymerization. This Symbiobacterium thermophilum (strain DSM 24528 / JCM 14929 / IAM 14863 / T) protein is Probable septum site-determining protein MinC.